A 357-amino-acid polypeptide reads, in one-letter code: Protein RecA (357 aa).

67 to 74 provides a ligand contact to ATP; sequence GPESSGKT. The segment at 332–357 is disordered; the sequence is PSAMSSSSSDDENSEGNVDFETGEVF.

This sequence belongs to the RecA family.

Its subcellular location is the cytoplasm. Functionally, can catalyze the hydrolysis of ATP in the presence of single-stranded DNA, the ATP-dependent uptake of single-stranded DNA by duplex DNA, and the ATP-dependent hybridization of homologous single-stranded DNAs. It interacts with LexA causing its activation and leading to its autocatalytic cleavage. This chain is Protein RecA, found in Shewanella sp. (strain ANA-3).